The following is a 129-amino-acid chain: MAKAKTERRLKDNEAQAIARTLRVSPQKLNLVAALIRGKKVDRALAELEFSRKRIAGTVKKTLESAIANAENNHDLDVDALVVAEAYVGKSITMKRFHARGRGRASRIEKPFAHLTIVVREVEEKGEAA.

It belongs to the universal ribosomal protein uL22 family. As to quaternary structure, part of the 50S ribosomal subunit.

In terms of biological role, this protein binds specifically to 23S rRNA; its binding is stimulated by other ribosomal proteins, e.g. L4, L17, and L20. It is important during the early stages of 50S assembly. It makes multiple contacts with different domains of the 23S rRNA in the assembled 50S subunit and ribosome. The globular domain of the protein is located near the polypeptide exit tunnel on the outside of the subunit, while an extended beta-hairpin is found that lines the wall of the exit tunnel in the center of the 70S ribosome. The sequence is that of Large ribosomal subunit protein uL22 from Agrobacterium fabrum (strain C58 / ATCC 33970) (Agrobacterium tumefaciens (strain C58)).